We begin with the raw amino-acid sequence, 722 residues long: Tegument protein UL46 (722 aa).

The disordered stretch occupies residues R423–Q534. Composition is skewed to basic and acidic residues over residues C440 to N451 and H474 to P491. A compositionally biased stretch (pro residues) spans P510 to Q522. The segment covering R523 to Q534 has biased composition (low complexity).

Belongs to the herpesviridae HHV-1 VP11/12 protein family. As to quaternary structure, interacts with VP16. Interacts with host LCK, PIK3R1, SHC1 AND GRB2; these interactions promote the activation of the PI3K/AKT pathway. Interacts with host YWHAB. Interacts with ICP0; this interaction targets UL46 for degradation by the proteasome. Phosphorylated by host LCK. The phosphorylation seems to be lymphocyte-specific.

The protein resides in the virion tegument. It localises to the host cell membrane. In terms of biological role, plays a role in the activation of the host PI3K/AKT pathway to promote cell survival. Interacts with and activates host LCK and thereby recruits downstream partners SHC1, GRB2 and PI3KR1 in order to activate the PI3K pathway by phosphorylating host AKT on its activating residues. This mechanism is inhibited by the viral protein US3 that instead promotes incorporation of UL46 into virions. The chain is Tegument protein UL46 from Homo sapiens (Human).